A 321-amino-acid polypeptide reads, in one-letter code: CRISPR-associated endonuclease Cas1 2 (321 aa).

Positions 150, 213, and 228 each coordinate Mn(2+).

The protein belongs to the CRISPR-associated endonuclease Cas1 family. As to quaternary structure, homodimer, forms a heterotetramer with a Cas2 homodimer. Mg(2+) serves as cofactor. The cofactor is Mn(2+).

Functionally, CRISPR (clustered regularly interspaced short palindromic repeat), is an adaptive immune system that provides protection against mobile genetic elements (viruses, transposable elements and conjugative plasmids). CRISPR clusters contain spacers, sequences complementary to antecedent mobile elements, and target invading nucleic acids. CRISPR clusters are transcribed and processed into CRISPR RNA (crRNA). Acts as a dsDNA endonuclease. Involved in the integration of spacer DNA into the CRISPR cassette. The chain is CRISPR-associated endonuclease Cas1 2 from Moorella thermoacetica (strain ATCC 39073 / JCM 9320).